A 130-amino-acid polypeptide reads, in one-letter code: uncharacterized protein (130 aa).

The signal sequence occupies residues 1–26 (MINNFKGILIIILSFLFLLLFKYSNA). The N-linked (GlcNAc...) asparagine glycan is linked to Asn-58.

Belongs to the Dictyostelium gerABC family.

The protein localises to the secreted. This is an uncharacterized protein from Dictyostelium discoideum (Social amoeba).